The chain runs to 220 residues: Glycerol-3-phosphate acyltransferase (220 aa).

The next 5 membrane-spanning stretches (helical) occupy residues 4–24 (LTIL…AVLV), 53–73 (VAAL…VYLA), 80–100 (PVYL…PIFF), 116–136 (MPIG…VLLV), and 138–158 (GYSS…TYLI). The disordered stretch occupies residues 193 to 220 (WGRQAQRRQEEVGEMDDVAQKRDERDKK). Basic and acidic residues predominate over residues 210–220 (VAQKRDERDKK).

Belongs to the PlsY family. In terms of assembly, probably interacts with PlsX.

The protein localises to the cell inner membrane. It carries out the reaction an acyl phosphate + sn-glycerol 3-phosphate = a 1-acyl-sn-glycero-3-phosphate + phosphate. The protein operates within lipid metabolism; phospholipid metabolism. Catalyzes the transfer of an acyl group from acyl-phosphate (acyl-PO(4)) to glycerol-3-phosphate (G3P) to form lysophosphatidic acid (LPA). This enzyme utilizes acyl-phosphate as fatty acyl donor, but not acyl-CoA or acyl-ACP. The sequence is that of Glycerol-3-phosphate acyltransferase from Aeromonas salmonicida (strain A449).